A 285-amino-acid polypeptide reads, in one-letter code: 2-dehydro-3-deoxyphosphooctonate aldolase (285 aa).

Belongs to the KdsA family.

Its subcellular location is the cytoplasm. The enzyme catalyses D-arabinose 5-phosphate + phosphoenolpyruvate + H2O = 3-deoxy-alpha-D-manno-2-octulosonate-8-phosphate + phosphate. The protein operates within carbohydrate biosynthesis; 3-deoxy-D-manno-octulosonate biosynthesis; 3-deoxy-D-manno-octulosonate from D-ribulose 5-phosphate: step 2/3. It functions in the pathway bacterial outer membrane biogenesis; lipopolysaccharide biosynthesis. The sequence is that of 2-dehydro-3-deoxyphosphooctonate aldolase from Delftia acidovorans (strain DSM 14801 / SPH-1).